We begin with the raw amino-acid sequence, 159 residues long: Transmembrane protein 42 (159 aa).

A run of 4 helical transmembrane segments spans residues 37-57, 68-88, 100-120, and 124-144; these read FWGV…AASA, GFCV…WTFF, IASV…GFVL, and CQEV…TLIH.

The protein localises to the membrane. The chain is Transmembrane protein 42 (TMEM42) from Bos taurus (Bovine).